The following is a 520-amino-acid chain: MGSKLPELPKLSPEKHRWEKSNVDPRVLQRRGIGSEAIVGMERSNRRGQYDLYLLATLRTAHVSTSTPLSLLYLKEKLELALLVMRFEHPECACTVTWDDQVPPIIQYASPQNDEEALMWAKSSVHIRTTSQTGFDVRYEIEGKRQDLDQDNMEPSRPIVIYLISNVTNGDAQLTSGATVDVLLHMNHLFWDGISARMFTGDLFRELNKLINSNEQELPKLQWGTEASNLSAPVLDALKINIEELREEFEAASNQFVKALYENYGGWGLEFKSGLGLPRTDIHTSTATESKAIINGVKTRLGPQYTISHLAQAAVVIAMLEIIQPPNLTDKDIFVSPMPVNGRRWLKDGLADHHYSICETGAVIRIENIKSLVLNNNNDKGYRPRCDEKKPGEDVKKSFDQWLGNPYQLALGLAVHTLEASFLTANPMPFDKVAAPFFISDGRNEQFIPASITTTTGEILMTIDNFVFFLNQCLPYLAIRLESWKDASTLSVCYNKANYSQEEATKFLKCVAKYMLIFSQ.

Residues 1 to 23 (MGSKLPELPKLSPEKHRWEKSNV) are disordered. Residues 12-23 (SPEKHRWEKSNV) are compositionally biased toward basic and acidic residues.

The protein belongs to the trichothecene O-acetyltransferase family.

It participates in sesquiterpene biosynthesis; trichothecene biosynthesis. In terms of biological role, trichothecene O-acetyltransferase; part of the gene cluster that mediates the production of the antimicrobial trichothecene harzianum A (HA) that plays a role in Botrytis cinerea antagonistic activity and plant defense priming. The biosynthesis of harzianum A begins with the cyclization of farnesyl diphosphate to trichodiene and is catalyzed by the trichodiene synthase TRI5. Trichodiene undergoes a series of oxygenations catalyzed by the cytochrome P450 monooxygenase TRI4. TRI4 controls the addition of 3 oxygens at C-2, C-11, and the C-12, C-13-epoxide to form the intermediate isotrichodiol. Isotrichodiol then undergoes a non-enzymatic isomerization and cyclization to form 12,13-epoxytrichothec-9-ene (EPT) which is further converted to trichodermol by the cytochrome P450 monooxygenase TRI11 via C-4 hydroxylation. The last step of HA synthesis is esterification of an octatriendioyl moiety to the C-4 oxygen of trichodermol. The octatriendioyl moiety is probably produced by the polyketide synthase TRI17 and the esterification performed by the trichothecene O-acetyltransferase TRI3. This chain is Trichothecene O-acetyltransferase TRI3, found in Trichoderma arundinaceum.